Reading from the N-terminus, the 150-residue chain is D-aminoacyl-tRNA deacylase (150 aa).

A Gly-cisPro motif, important for rejection of L-amino acids motif is present at residues Gly138–Pro139.

The protein belongs to the DTD family. In terms of assembly, homodimer.

The protein localises to the cytoplasm. The enzyme catalyses glycyl-tRNA(Ala) + H2O = tRNA(Ala) + glycine + H(+). It catalyses the reaction a D-aminoacyl-tRNA + H2O = a tRNA + a D-alpha-amino acid + H(+). An aminoacyl-tRNA editing enzyme that deacylates mischarged D-aminoacyl-tRNAs. Also deacylates mischarged glycyl-tRNA(Ala), protecting cells against glycine mischarging by AlaRS. Acts via tRNA-based rather than protein-based catalysis; rejects L-amino acids rather than detecting D-amino acids in the active site. By recycling D-aminoacyl-tRNA to D-amino acids and free tRNA molecules, this enzyme counteracts the toxicity associated with the formation of D-aminoacyl-tRNA entities in vivo and helps enforce protein L-homochirality. The sequence is that of D-aminoacyl-tRNA deacylase from Bacteroides fragilis (strain ATCC 25285 / DSM 2151 / CCUG 4856 / JCM 11019 / LMG 10263 / NCTC 9343 / Onslow / VPI 2553 / EN-2).